Reading from the N-terminus, the 340-residue chain is Histidinol-phosphate aminotransferase (340 aa).

Lys-204 is subject to N6-(pyridoxal phosphate)lysine.

This sequence belongs to the class-II pyridoxal-phosphate-dependent aminotransferase family. Histidinol-phosphate aminotransferase subfamily. Pyridoxal 5'-phosphate is required as a cofactor.

The enzyme catalyses L-histidinol phosphate + 2-oxoglutarate = 3-(imidazol-4-yl)-2-oxopropyl phosphate + L-glutamate. Its pathway is amino-acid biosynthesis; L-histidine biosynthesis; L-histidine from 5-phospho-alpha-D-ribose 1-diphosphate: step 7/9. This is Histidinol-phosphate aminotransferase from Thermococcus gammatolerans (strain DSM 15229 / JCM 11827 / EJ3).